Here is a 117-residue protein sequence, read N- to C-terminus: Large ribosomal subunit protein bL20c (117 aa).

The protein belongs to the bacterial ribosomal protein bL20 family.

It is found in the plastid. It localises to the chloroplast. Functionally, binds directly to 23S ribosomal RNA and is necessary for the in vitro assembly process of the 50S ribosomal subunit. It is not involved in the protein synthesizing functions of that subunit. The polypeptide is Large ribosomal subunit protein bL20c (Olimarabidopsis pumila (Dwarf rocket)).